Here is a 233-residue protein sequence, read N- to C-terminus: Small ribosomal subunit protein uS7m (233 aa).

Residues 1–28 (MAAPTAAGLCPRLRAWLPRLTQVRWSRY) constitute a mitochondrion transit peptide.

This sequence belongs to the universal ribosomal protein uS7 family. As to quaternary structure, component of the mitochondrial ribosome small subunit (28S) which comprises a 12S rRNA and about 30 distinct proteins.

It is found in the mitochondrion. This is Small ribosomal subunit protein uS7m (MRPS7) from Gallus gallus (Chicken).